A 316-amino-acid chain; its full sequence is Na(+)-translocating NADH-quinone reductase subunit C (316 aa).

The chain crosses the membrane as a helical span at residues 13-33 (WYIILFIFVLSLIAGTLLSSV). An FMN phosphoryl threonine modification is found at Thr-280.

It belongs to the NqrC family. In terms of assembly, composed of six subunits; NqrA, NqrB, NqrC, NqrD, NqrE and NqrF. It depends on FMN as a cofactor.

Its subcellular location is the cell inner membrane. It catalyses the reaction a ubiquinone + n Na(+)(in) + NADH + H(+) = a ubiquinol + n Na(+)(out) + NAD(+). Its function is as follows. NQR complex catalyzes the reduction of ubiquinone-1 to ubiquinol by two successive reactions, coupled with the transport of Na(+) ions from the cytoplasm to the periplasm. NqrA to NqrE are probably involved in the second step, the conversion of ubisemiquinone to ubiquinol. The chain is Na(+)-translocating NADH-quinone reductase subunit C from Chlamydia trachomatis serovar D (strain ATCC VR-885 / DSM 19411 / UW-3/Cx).